The chain runs to 288 residues: Polyprenyl transferase eriF (288 aa).

The next 6 membrane-spanning stretches (helical) occupy residues 24–44 (ASII…TLPL), 51–71 (YIFL…LNQV), 101–121 (IAAF…LPET), 145–165 (CIAM…AISP), 215–235 (FIIT…GGIF), and 268–288 (FYTY…HGLI).

Belongs to the UbiA prenyltransferase family. Requires Mg(2+) as cofactor.

Its subcellular location is the membrane. Its function is as follows. Polyprenyl transferase; part of the gene cluster that mediates the biosynthesis of erinacines, cyathane-xylosides that show unique biological activities, including leishmanicidal activity, stimulating activity for nerve growth-factor synthesis, and agonistic activity toward the kappa opioid receptor. The role of eriF within the pathway has still to be determined. The first step of the erinacines biosynthesis pathway is catalyzed by the geranylgeranyl diphosphate (GGPP) synthase eriE via conversion of farnesyl pyrophosphate and isopentyl pyrophosphate into geranylgeranyl pyrophosphate (GGPP). GGPP is then substrate of the diterpene cyclase eriG for the production of cyatha-3,12-diene. The cytochrome P450 monooxygenase eriI then hydroxylates cyatha-3,12-diene at C-14 of the seven-membered ring to produce erinacol, which is further hydroxylated at C-15 by the cytochrome P450 monooxygenase eriC to yield cyathadiol. The cytochrome P450 monooxygenase eriA then catalyzes C-11 hydroxylation in the presence of the short chain dehydrogenase/reductase (SDR) eriH, which leads to the production of cyathatriol. The acetyltransferase eriL converts cyathatriol into 11-O-acetyl-cyathatriol. The SDR eriH catalyzes further oxidation of 11-O-acetyl-cyathatriol into 1-O-acetylcyathin A3. Finally, the glycosyl transferase eriJ tranfers xylose from UDP-xylose onto C-14 of 11-O-acetyl-cyathatriol to form eracine Q. EriJ is also able to convert 11-O-acetyl-cyathatriol to eracine Q2 by using UDP-D-glucose as cosubstrate, but at a lower rate. This chain is Polyprenyl transferase eriF, found in Hericium erinaceus (Lion's mane mushroom).